The following is a 397-amino-acid chain: Putative 3'(2'),5'-bisphosphate nucleotidase, mitochondrial (397 aa).

A mitochondrion-targeting transit peptide spans 1 to 16 (MYILDTGARFSAVRFS). The Proton acceptor role is filled by Asp91. The Mg(2+) site is built by Glu114, Asp174, Ile176, and Asp177. The Proton acceptor role is filled by Thr179. Thr179, Ser305, Lys308, and Asp334 together coordinate adenosine 3',5'-bisphosphate. Residues Ser305, Lys308, and Asp334 each coordinate AMP. Asp334 serves as a coordination point for Mg(2+).

This sequence belongs to the inositol monophosphatase superfamily. Mg(2+) serves as cofactor.

It localises to the mitochondrion. It catalyses the reaction 3'-phosphoadenylyl sulfate + H2O = adenosine 5'-phosphosulfate + phosphate. It carries out the reaction adenosine 3',5'-bisphosphate + H2O = AMP + phosphate. The catalysed reaction is adenosine 2',5'-bisphosphate + H2O = AMP + phosphate. Functionally, phosphatase that converts adenosine 3'-phosphate 5'-phosphosulfate (PAPS) to adenosine 5'-phosphosulfate (APS) and 3'(2')-phosphoadenosine 5'-phosphate (PAP) to AMP. This chain is Putative 3'(2'),5'-bisphosphate nucleotidase, mitochondrial, found in Arabidopsis thaliana (Mouse-ear cress).